Reading from the N-terminus, the 310-residue chain is Ribonuclease Z (310 aa).

Residues His64, His66, Asp68, His69, His142, Asp213, and His271 each contribute to the Zn(2+) site. Asp68 acts as the Proton acceptor in catalysis.

This sequence belongs to the RNase Z family. In terms of assembly, homodimer. Zn(2+) serves as cofactor.

The enzyme catalyses Endonucleolytic cleavage of RNA, removing extra 3' nucleotides from tRNA precursor, generating 3' termini of tRNAs. A 3'-hydroxy group is left at the tRNA terminus and a 5'-phosphoryl group is left at the trailer molecule.. In terms of biological role, zinc phosphodiesterase, which displays some tRNA 3'-processing endonuclease activity. Probably involved in tRNA maturation, by removing a 3'-trailer from precursor tRNA. This is Ribonuclease Z from Treponema pallidum (strain Nichols).